A 171-amino-acid chain; its full sequence is Ribosome maturation factor RimM (171 aa).

The PRC barrel domain occupies 96–169; the sequence is EGEFFIADMI…KMIIDPIKGM (74 aa).

It belongs to the RimM family. As to quaternary structure, binds ribosomal protein uS19.

The protein resides in the cytoplasm. Its function is as follows. An accessory protein needed during the final step in the assembly of 30S ribosomal subunit, possibly for assembly of the head region. Essential for efficient processing of 16S rRNA. May be needed both before and after RbfA during the maturation of 16S rRNA. It has affinity for free ribosomal 30S subunits but not for 70S ribosomes. The sequence is that of Ribosome maturation factor RimM from Clostridioides difficile (strain 630) (Peptoclostridium difficile).